Reading from the N-terminus, the 213-residue chain is Histone H1 (213 aa).

Positions 1-25 (MAAATASAAATPAKKAAPKKPAAAP) are enriched in low complexity. 2 disordered regions span residues 1 to 30 (MAAA…HPSY) and 81 to 213 (GEFV…AKSS). Residues 26–97 (EHPSYKEMLT…GPSGTVKLAK (72 aa)) enclose the H15 domain. Composition is skewed to low complexity over residues 102-113 (AAAPKKPAAKKA), 123-137 (KKAA…PKSA), 157-176 (KKAA…APVK), and 203-213 (PKKAATPAKSS).

The protein belongs to the histone H1/H5 family.

It is found in the nucleus. It localises to the chromosome. Functionally, could act as an H1-type linker histone. This is Histone H1 from Ascobolus immersus.